Reading from the N-terminus, the 148-residue chain is 3-dehydroquinate dehydratase (148 aa).

Residue Tyr-23 is the Proton acceptor of the active site. Residues Asn-75, His-81, and Asp-88 each coordinate substrate. The active-site Proton donor is His-101. Substrate-binding positions include 102-103 (LS) and Arg-112.

This sequence belongs to the type-II 3-dehydroquinase family. As to quaternary structure, homododecamer.

The catalysed reaction is 3-dehydroquinate = 3-dehydroshikimate + H2O. Its pathway is metabolic intermediate biosynthesis; chorismate biosynthesis; chorismate from D-erythrose 4-phosphate and phosphoenolpyruvate: step 3/7. In terms of biological role, catalyzes a trans-dehydration via an enolate intermediate. The protein is 3-dehydroquinate dehydratase of Xylella fastidiosa (strain 9a5c).